Consider the following 450-residue polypeptide: Probable rhamnogalacturonase E (450 aa).

A signal peptide spans 1–22 (MTWSTSFLSVHFFAFITTSIHA). The cysteines at positions 43 and 69 are disulfide-linked. Asn-54, Asn-92, and Asn-131 each carry an N-linked (GlcNAc...) asparagine glycan. Residue Asp-222 is the Proton donor of the active site. Cys-224 and Cys-241 are oxidised to a cystine. N-linked (GlcNAc...) asparagine glycans are attached at residues Asn-242 and Asn-257. Residue His-297 is part of the active site. Asn-324 and Asn-329 each carry an N-linked (GlcNAc...) asparagine glycan. Disulfide bonds link Cys-347/Cys-353 and Cys-375/Cys-384.

Belongs to the glycosyl hydrolase 28 family.

It is found in the secreted. In terms of biological role, pectinolytic enzymes consist of four classes of enzymes: pectine lyase, polygalacturonase, pectin methylesterase and rhamnogalacturonase. Hydrolyzes alpha-D-galacturonopyranosyl-(1,2)-alpha-L-rhamnopyranosyl linkages in the backbone of the hairy regions of pectins. The protein is Probable rhamnogalacturonase E (rhgE) of Aspergillus niger.